Here is a 489-residue protein sequence, read N- to C-terminus: UDP-N-acetylmuramoylalanine--D-glutamate ligase (489 aa).

126-132 (GTNGKTT) contributes to the ATP binding site.

It belongs to the MurCDEF family.

It localises to the cytoplasm. It carries out the reaction UDP-N-acetyl-alpha-D-muramoyl-L-alanine + D-glutamate + ATP = UDP-N-acetyl-alpha-D-muramoyl-L-alanyl-D-glutamate + ADP + phosphate + H(+). It functions in the pathway cell wall biogenesis; peptidoglycan biosynthesis. In terms of biological role, cell wall formation. Catalyzes the addition of glutamate to the nucleotide precursor UDP-N-acetylmuramoyl-L-alanine (UMA). In Mycobacterium avium (strain 104), this protein is UDP-N-acetylmuramoylalanine--D-glutamate ligase.